The primary structure comprises 332 residues: ATPase GET3 (332 aa).

Lys32 to Thr39 lines the ATP pocket. Asp61 is an active-site residue. 2 residues coordinate ATP: Glu235 and Asn262. Zn(2+) contacts are provided by Cys273 and Cys276.

This sequence belongs to the arsA ATPase family. As to quaternary structure, homodimer.

The protein localises to the cytoplasm. Its subcellular location is the endoplasmic reticulum. Its function is as follows. ATPase required for the post-translational delivery of tail-anchored (TA) proteins to the endoplasmic reticulum. Recognizes and selectively binds the transmembrane domain of TA proteins in the cytosol. This complex then targets to the endoplasmic reticulum by membrane-bound receptors, where the tail-anchored protein is released for insertion. This process is regulated by ATP binding and hydrolysis. ATP binding drives the homodimer towards the closed dimer state, facilitating recognition of newly synthesized TA membrane proteins. ATP hydrolysis is required for insertion. Subsequently, the homodimer reverts towards the open dimer state, lowering its affinity for the membrane-bound receptor, and returning it to the cytosol to initiate a new round of targeting. The chain is ATPase GET3 from Mycosarcoma maydis (Corn smut fungus).